The primary structure comprises 161 residues: Phosphopantetheine adenylyltransferase (161 aa).

Position 9 (S9) interacts with substrate. ATP-binding positions include 9–10 (SF) and H17. 3 residues coordinate substrate: K41, T74, and R88. ATP contacts are provided by residues 89–91 (GVR), E99, and 124–130 (NSFVASS).

The protein belongs to the bacterial CoaD family. In terms of assembly, homohexamer. The cofactor is Mg(2+).

It localises to the cytoplasm. It catalyses the reaction (R)-4'-phosphopantetheine + ATP + H(+) = 3'-dephospho-CoA + diphosphate. It participates in cofactor biosynthesis; coenzyme A biosynthesis; CoA from (R)-pantothenate: step 4/5. Its function is as follows. Reversibly transfers an adenylyl group from ATP to 4'-phosphopantetheine, yielding dephospho-CoA (dPCoA) and pyrophosphate. This Lactobacillus acidophilus (strain ATCC 700396 / NCK56 / N2 / NCFM) protein is Phosphopantetheine adenylyltransferase.